We begin with the raw amino-acid sequence, 398 residues long: Cytochrome b (398 aa).

Helical transmembrane passes span 33-53, 77-98, 113-133, and 178-198; these read FGSLLGLCLVAQIITGLFLAM, WLIRNLHANGASFFFICVYLHI, WNIGVILLLLVMMTAFVGYVL, and FFAFHFLFPFLIAAFTIIHLL. Heme b-binding residues include His83 and His97. The heme b site is built by His182 and His196. His201 provides a ligand contact to a ubiquinone. A run of 4 helical transmembrane segments spans residues 226-246, 288-308, 320-340, and 347-367; these read YKDLLGFAILLIALISLSLFA, LGGVLALLASILILMLVPILH, FTQLLFWLLVADVIILTWIGG, and YVVIGQIASFLYFFLFLFLIP.

Belongs to the cytochrome b family. The cytochrome bc1 complex contains 3 respiratory subunits (MT-CYB, CYC1 and UQCRFS1), 2 core proteins (UQCRC1 and UQCRC2) and probably 6 low-molecular weight proteins. Heme b is required as a cofactor.

The protein localises to the mitochondrion inner membrane. In terms of biological role, component of the ubiquinol-cytochrome c reductase complex (complex III or cytochrome b-c1 complex) that is part of the mitochondrial respiratory chain. The b-c1 complex mediates electron transfer from ubiquinol to cytochrome c. Contributes to the generation of a proton gradient across the mitochondrial membrane that is then used for ATP synthesis. This chain is Cytochrome b (mt-cyb), found in Channa asiatica (Small snakehead).